Consider the following 834-residue polypeptide: WPP domain-associated protein (834 aa).

3 coiled-coil regions span residues 410–456, 574–700, and 792–812; these read SFGN…RLQH, SLDT…VLAI, and AEAEVDLLGDEVDTLLSLVEK.

As to quaternary structure, interacts with MAF1. In terms of tissue distribution, expressed in seedlings, leaves and fruits.

Its subcellular location is the golgi apparatus. The protein localises to the cytoplasm. In Solanum lycopersicum (Tomato), this protein is WPP domain-associated protein (WAP).